Reading from the N-terminus, the 262-residue chain is Hydroxyethylthiazole kinase (262 aa).

Position 50 (methionine 50) interacts with substrate. Residues arginine 125 and threonine 171 each contribute to the ATP site. Glycine 198 serves as a coordination point for substrate.

The protein belongs to the Thz kinase family. The cofactor is Mg(2+).

It carries out the reaction 5-(2-hydroxyethyl)-4-methylthiazole + ATP = 4-methyl-5-(2-phosphooxyethyl)-thiazole + ADP + H(+). It participates in cofactor biosynthesis; thiamine diphosphate biosynthesis; 4-methyl-5-(2-phosphoethyl)-thiazole from 5-(2-hydroxyethyl)-4-methylthiazole: step 1/1. Catalyzes the phosphorylation of the hydroxyl group of 4-methyl-5-beta-hydroxyethylthiazole (THZ). The chain is Hydroxyethylthiazole kinase from Citrobacter koseri (strain ATCC BAA-895 / CDC 4225-83 / SGSC4696).